A 248-amino-acid chain; its full sequence is uncharacterized protein (248 aa).

This sequence belongs to the glycosyltransferase 2 family.

This is an uncharacterized protein from Acanthamoeba polyphaga (Amoeba).